Here is a 546-residue protein sequence, read N- to C-terminus: CTP synthase (546 aa).

Positions 1-265 (MTKYVFVTGG…DEIVCHKLNI (265 aa)) are amidoligase domain. Serine 13 contributes to the CTP binding site. Serine 13 contributes to the UTP binding site. Residues 14–19 (SLGKGI) and aspartate 71 contribute to the ATP site. The Mg(2+) site is built by aspartate 71 and glutamate 139. CTP-binding positions include 146–148 (DIE), 186–191 (KTKPTQ), and lysine 222. Residues 186 to 191 (KTKPTQ) and lysine 222 each bind UTP. The region spanning 290-543 (NIAFVGKYVD…VRAALAHQQK (254 aa)) is the Glutamine amidotransferase type-1 domain. L-glutamine is bound at residue glycine 351. The Nucleophile; for glutamine hydrolysis role is filled by cysteine 378. L-glutamine contacts are provided by residues 379–382 (LGMQ), glutamate 402, and arginine 469. Active-site residues include histidine 516 and glutamate 518.

Belongs to the CTP synthase family. In terms of assembly, homotetramer.

It carries out the reaction UTP + L-glutamine + ATP + H2O = CTP + L-glutamate + ADP + phosphate + 2 H(+). It catalyses the reaction L-glutamine + H2O = L-glutamate + NH4(+). The enzyme catalyses UTP + NH4(+) + ATP = CTP + ADP + phosphate + 2 H(+). Its pathway is pyrimidine metabolism; CTP biosynthesis via de novo pathway; CTP from UDP: step 2/2. Its activity is regulated as follows. Allosterically activated by GTP, when glutamine is the substrate; GTP has no effect on the reaction when ammonia is the substrate. The allosteric effector GTP functions by stabilizing the protein conformation that binds the tetrahedral intermediate(s) formed during glutamine hydrolysis. Inhibited by the product CTP, via allosteric rather than competitive inhibition. In terms of biological role, catalyzes the ATP-dependent amination of UTP to CTP with either L-glutamine or ammonia as the source of nitrogen. Regulates intracellular CTP levels through interactions with the four ribonucleotide triphosphates. This is CTP synthase from Thiobacillus denitrificans (strain ATCC 25259 / T1).